A 638-amino-acid polypeptide reads, in one-letter code: 1-deoxy-D-xylulose-5-phosphate synthase (638 aa).

Thiamine diphosphate is bound by residues H72 and 113–115 (GHA). Mg(2+) is bound at residue D144. Residues 145–146 (GA), N174, Y287, and E370 contribute to the thiamine diphosphate site. Position 174 (N174) interacts with Mg(2+).

Belongs to the transketolase family. DXPS subfamily. In terms of assembly, homodimer. Mg(2+) is required as a cofactor. It depends on thiamine diphosphate as a cofactor.

The catalysed reaction is D-glyceraldehyde 3-phosphate + pyruvate + H(+) = 1-deoxy-D-xylulose 5-phosphate + CO2. It functions in the pathway metabolic intermediate biosynthesis; 1-deoxy-D-xylulose 5-phosphate biosynthesis; 1-deoxy-D-xylulose 5-phosphate from D-glyceraldehyde 3-phosphate and pyruvate: step 1/1. In terms of biological role, catalyzes the acyloin condensation reaction between C atoms 2 and 3 of pyruvate and glyceraldehyde 3-phosphate to yield 1-deoxy-D-xylulose-5-phosphate (DXP). The chain is 1-deoxy-D-xylulose-5-phosphate synthase from Thermosynechococcus vestitus (strain NIES-2133 / IAM M-273 / BP-1).